Consider the following 393-residue polypeptide: MLQIGTTFSKTATKILLCGAGELGKEVAIEAQRLGLEVIALDRYENAPAMQVADRSYTLSMLDGEALRHIIEKEKPDYIVPEIEAIATDTLAKLEQEGFNIVPSAKATQLTMNREGIRRLAAEDLGIPTSPYAFADNKEDFTAAVDAIGIPCVVKPIMSSSGKGQSVIKSTADIDSAWHYAQEGGRAGKGKVIIEGFVDFDYEITLLTIRHKNGTSFCAPIGHIQEDGDYRQSWQPHPMSDIAVQSAEKIALKITEALGGWGLFGVELFIKDDQVIFSEVSPRPHDTGLVTLISQDLSEFALHLRAILGLPIPNITQHGPSASSVILPTGHSTETQFSGLEDALKEPDTQIRLFGKPEIAGRRRMGVALARDTSIEKAIEKAKASAMAVKVDF.

N(1)-(5-phospho-beta-D-ribosyl)glycinamide is bound by residues 22–23 (EL) and Glu-82. ATP contacts are provided by residues Arg-114, Lys-155, 160 to 165 (SSGKGQ), 195 to 198 (EGFV), and Glu-203. The 190-residue stretch at 119–308 (RLAAEDLGIP…EFALHLRAIL (190 aa)) folds into the ATP-grasp domain. Glu-267 and Glu-279 together coordinate Mg(2+). Residues Asp-286, Lys-356, and 363–364 (RR) each bind N(1)-(5-phospho-beta-D-ribosyl)glycinamide.

This sequence belongs to the PurK/PurT family. In terms of assembly, homodimer.

The enzyme catalyses N(1)-(5-phospho-beta-D-ribosyl)glycinamide + formate + ATP = N(2)-formyl-N(1)-(5-phospho-beta-D-ribosyl)glycinamide + ADP + phosphate + H(+). Its pathway is purine metabolism; IMP biosynthesis via de novo pathway; N(2)-formyl-N(1)-(5-phospho-D-ribosyl)glycinamide from N(1)-(5-phospho-D-ribosyl)glycinamide (formate route): step 1/1. In terms of biological role, involved in the de novo purine biosynthesis. Catalyzes the transfer of formate to 5-phospho-ribosyl-glycinamide (GAR), producing 5-phospho-ribosyl-N-formylglycinamide (FGAR). Formate is provided by PurU via hydrolysis of 10-formyl-tetrahydrofolate. In Hydrogenovibrio crunogenus (strain DSM 25203 / XCL-2) (Thiomicrospira crunogena), this protein is Formate-dependent phosphoribosylglycinamide formyltransferase.